The chain runs to 284 residues: Bifunctional protein FolD (284 aa).

NADP(+) contacts are provided by residues glycine 165 to serine 167 and serine 190.

This sequence belongs to the tetrahydrofolate dehydrogenase/cyclohydrolase family. As to quaternary structure, homodimer.

It catalyses the reaction (6R)-5,10-methylene-5,6,7,8-tetrahydrofolate + NADP(+) = (6R)-5,10-methenyltetrahydrofolate + NADPH. The catalysed reaction is (6R)-5,10-methenyltetrahydrofolate + H2O = (6R)-10-formyltetrahydrofolate + H(+). Its pathway is one-carbon metabolism; tetrahydrofolate interconversion. Its function is as follows. Catalyzes the oxidation of 5,10-methylenetetrahydrofolate to 5,10-methenyltetrahydrofolate and then the hydrolysis of 5,10-methenyltetrahydrofolate to 10-formyltetrahydrofolate. The protein is Bifunctional protein FolD of Streptococcus sanguinis (strain SK36).